Here is a 130-residue protein sequence, read N- to C-terminus: Small ribosomal subunit protein uS9 (130 aa).

It belongs to the universal ribosomal protein uS9 family.

The polypeptide is Small ribosomal subunit protein uS9 (Pasteurella multocida (strain Pm70)).